Here is a 380-residue protein sequence, read N- to C-terminus: Cystathionine gamma-synthase (380 aa).

Lys195 carries the N6-(pyridoxal phosphate)lysine modification.

It belongs to the trans-sulfuration enzymes family. Homotetramer. Pyridoxal 5'-phosphate is required as a cofactor.

The protein localises to the cytoplasm. The enzyme catalyses O-succinyl-L-homoserine + L-cysteine = L,L-cystathionine + succinate + H(+). Functionally, catalyzes the formation of L-cystathionine from O-succinyl-L-homoserine (OSHS) and L-cysteine, via a gamma-replacement reaction. In the absence of thiol, catalyzes gamma-elimination to form 2-oxobutanoate, succinate and ammonia. This is Cystathionine gamma-synthase (metB) from Helicobacter pylori (strain J99 / ATCC 700824) (Campylobacter pylori J99).